The sequence spans 931 residues: Semaphorin-6C (931 aa).

A signal peptide spans 1–25; sequence MPRAPHSMPLLLLLLLLSSLPQAQA. Over 26-605 the chain is Extracellular; the sequence is AFPQDPTPLL…ASASRSIPIP (580 aa). A Sema domain is found at 31 to 517; it reads PTPLLTSDLQ…FPGCIVYLSL (487 aa). Residue Asn-71 is glycosylated (N-linked (GlcNAc...) asparagine). 4 disulfides stabilise this stretch: Cys-112-Cys-122, Cys-140-Cys-149, Cys-263-Cys-374, and Cys-288-Cys-333. N-linked (GlcNAc...) asparagine glycosylation occurs at Asn-287. N-linked (GlcNAc...) asparagine glycosylation is present at Asn-438. Intrachain disulfides connect Cys-480-Cys-511, Cys-520-Cys-538, Cys-526-Cys-571, and Cys-530-Cys-546. The segment at 556–591 is disordered; the sequence is DVDLTGNQESTEHGDCQDGATGSQSGPGDSAYGVRR. Residues 606–626 traverse the membrane as a helical segment; that stretch reads LLLACVAAAFALGASVSGLLV. Over 627 to 931 the chain is Cytoplasmic; the sequence is SCACRRANRR…PAPHGGHFNF (305 aa). Disordered stretches follow at residues 655–747 and 777–931; these read LARL…GGPA and HGPQ…HFNF. The span at 693–708 shows a compositional bias: low complexity; that stretch reads PPELACLPTPETTPEL. Over residues 893–906 the composition is skewed to basic and acidic residues; it reads PEGHRGRSLKRVDV. Over residues 911-923 the composition is skewed to pro residues; sequence SPKPPLASPPQPA.

The protein belongs to the semaphorin family.

It localises to the cell membrane. Functionally, may be a stop signal for the dorsal root ganglion neurons in their target areas, and possibly also for other neurons. May also be involved in the maintenance and remodeling of neuronal connections. The protein is Semaphorin-6C (Sema6c) of Mus musculus (Mouse).